The primary structure comprises 141 residues: MPTPSMEDYIEQIYILIEEKGYARVSDIAEALSVHPSSVTKMVQKLDKDEYLVYEKYRGLVLTPKGRKIGQRLVYRHELLEQFLRLIGVSEENIYRDVEGIEHHLSWNAIDRIGDLVQYFQEDERRLEALRDVQKRNEQGE.

An HTH dtxR-type domain is found at 1–63 (MPTPSMEDYI…YEKYRGLVLT (63 aa)). 6 residues coordinate Mn(2+): D8, E11, H77, E99, E102, and H103.

Belongs to the DtxR/MntR family. As to quaternary structure, homodimer.

It localises to the cytoplasm. DNA binding is strongly activated by Mn(2+). Central regulator of manganese homeostasis. The polypeptide is HTH-type transcriptional regulator MntR (Geobacillus kaustophilus (strain HTA426)).